Reading from the N-terminus, the 235-residue chain is Probable transcriptional regulatory protein Ccon26_04940 (235 aa).

Belongs to the TACO1 family.

It localises to the cytoplasm. In Campylobacter concisus (strain 13826), this protein is Probable transcriptional regulatory protein Ccon26_04940.